The primary structure comprises 477 residues: MSPQTETKASVGFKAGVKDYKLTYYTPEYETKDTDILAAFRVTPQPGVPPEEAGAAVAAESSTGTWTTVWTDGLTSLDRYKGRCYGIEPVPGEENQYIAYVAYPLDLFEEGSVTNMFTSIVGNVFGFKALRALRLEDLRIPTAYVKTFQGPRHGIQVERDKLNKYGRPLLGCTIKPKLGLSAKNYGRAVYECLRGGLDFTKDDENVNSQPFMRWRDRFLFCAEAIFKSQAETGEIKGHYLNATAGTCEEMMKRAIFARELGVPIVMHDYLTGGFTANTSLAHYCRDNGLLLHIHRAMHAVIDRQKNHGIHFRVLAKALRMSGGDHIHSGTVVGKLEGEREITLGFVDLLRDDFIEKDRSRGIYFTQDWVSLPGVLPVASGGIHVWHMPALTEIFGDDSVLQFGGGTLGHPWGNAPGAVANRVALEACVQARNEGRDLATEGNEIIREAAKWSPELAAACEVWKEIKFEFQAMDTLDK.

The propeptide occupies methionine 1–serine 2. At proline 3 the chain carries N-acetylproline. An N6,N6,N6-trimethyllysine modification is found at lysine 14. Residues asparagine 123 and threonine 173 each coordinate substrate. Residue lysine 175 is the Proton acceptor of the active site. Lysine 177 is a binding site for substrate. Mg(2+)-binding residues include lysine 201, aspartate 203, and glutamate 204. Residue lysine 201 is modified to N6-carboxylysine. The Proton acceptor role is filled by histidine 294. Positions 295, 327, and 379 each coordinate substrate.

It belongs to the RuBisCO large chain family. Type I subfamily. Heterohexadecamer of 8 large chains and 8 small chains; disulfide-linked. The disulfide link is formed within the large subunit homodimers. The cofactor is Mg(2+). Post-translationally, the disulfide bond which can form in the large chain dimeric partners within the hexadecamer appears to be associated with oxidative stress and protein turnover.

It is found in the plastid. It localises to the chloroplast. It catalyses the reaction 2 (2R)-3-phosphoglycerate + 2 H(+) = D-ribulose 1,5-bisphosphate + CO2 + H2O. It carries out the reaction D-ribulose 1,5-bisphosphate + O2 = 2-phosphoglycolate + (2R)-3-phosphoglycerate + 2 H(+). Its function is as follows. RuBisCO catalyzes two reactions: the carboxylation of D-ribulose 1,5-bisphosphate, the primary event in carbon dioxide fixation, as well as the oxidative fragmentation of the pentose substrate in the photorespiration process. Both reactions occur simultaneously and in competition at the same active site. This is Ribulose bisphosphate carboxylase large chain from Cichorium intybus (Chicory).